The chain runs to 161 residues: Cyclic pyranopterin monophosphate synthase (161 aa).

Substrate is bound by residues Met75–His77 and Met114–Glu115. Asp129 is an active-site residue.

Belongs to the MoaC family. As to quaternary structure, homohexamer; trimer of dimers.

It catalyses the reaction (8S)-3',8-cyclo-7,8-dihydroguanosine 5'-triphosphate = cyclic pyranopterin phosphate + diphosphate. It functions in the pathway cofactor biosynthesis; molybdopterin biosynthesis. Its function is as follows. Catalyzes the conversion of (8S)-3',8-cyclo-7,8-dihydroguanosine 5'-triphosphate to cyclic pyranopterin monophosphate (cPMP). This chain is Cyclic pyranopterin monophosphate synthase, found in Staphylococcus carnosus (strain TM300).